The chain runs to 874 residues: Probable inorganic carbon transporter subunit DabA (874 aa).

Zn(2+)-binding residues include cysteine 398, aspartate 400, histidine 580, and cysteine 595.

It belongs to the inorganic carbon transporter (TC 9.A.2) DabA family. As to quaternary structure, forms a complex with DabB. Zn(2+) is required as a cofactor.

Its subcellular location is the cell membrane. Its function is as follows. Part of an energy-coupled inorganic carbon pump. The sequence is that of Probable inorganic carbon transporter subunit DabA from Bacillus cereus (strain AH820).